The primary structure comprises 394 residues: uncharacterized protein (394 aa).

The F-box domain occupies 7–51 (RKVIPNMPDLILRKIFDQYDYPVLCKMERVCRRWTNIINSKFRKE).

This is an uncharacterized protein from Caenorhabditis elegans.